Here is a 406-residue protein sequence, read N- to C-terminus: Cysteine desulfurase (406 aa).

Lysine 226 carries the N6-(pyridoxal phosphate)lysine modification. Cysteine 364 serves as the catalytic Cysteine persulfide intermediate.

Belongs to the class-V pyridoxal-phosphate-dependent aminotransferase family. Csd subfamily. As to quaternary structure, homodimer. Interacts with SufE and the SufBCD complex composed of SufB, SufC and SufD. The interaction with SufE is required to mediate the direct transfer of the sulfur atom from the S-sulfanylcysteine. Requires pyridoxal 5'-phosphate as cofactor.

It is found in the cytoplasm. The enzyme catalyses (sulfur carrier)-H + L-cysteine = (sulfur carrier)-SH + L-alanine. It catalyses the reaction L-selenocysteine + AH2 = hydrogenselenide + L-alanine + A + H(+). It functions in the pathway cofactor biosynthesis; iron-sulfur cluster biosynthesis. Its function is as follows. Cysteine desulfurases mobilize the sulfur from L-cysteine to yield L-alanine, an essential step in sulfur metabolism for biosynthesis of a variety of sulfur-containing biomolecules. Component of the suf operon, which is activated and required under specific conditions such as oxidative stress and iron limitation. Acts as a potent selenocysteine lyase in vitro, that mobilizes selenium from L-selenocysteine. Selenocysteine lyase activity is however unsure in vivo. This chain is Cysteine desulfurase, found in Escherichia coli O6:K15:H31 (strain 536 / UPEC).